A 196-amino-acid chain; its full sequence is Homeobox protein ANF-1 (196 aa).

A DNA-binding region (homeobox) is located at residues 119 to 178; it reads GRRPRTAFTRNQIEVLENVFKMNSYPGIDIREELARKLDLEEDRIQIWFQNRRAKLKRSH.

The protein belongs to the ANF homeobox family.

It is found in the nucleus. In terms of biological role, may be involved in the early patterning of the most anterior region of the main embryonic body axis. The protein is Homeobox protein ANF-1 of Gallus gallus (Chicken).